Reading from the N-terminus, the 186-residue chain is ATP synthase subunit delta (186 aa).

The protein belongs to the ATPase delta chain family. F-type ATPases have 2 components, F(1) - the catalytic core - and F(0) - the membrane proton channel. F(1) has five subunits: alpha(3), beta(3), gamma(1), delta(1), epsilon(1). CF(0) has four main subunits: a(1), b(1), b'(1) and c(10-14). The alpha and beta chains form an alternating ring which encloses part of the gamma chain. F(1) is attached to F(0) by a central stalk formed by the gamma and epsilon chains, while a peripheral stalk is formed by the delta, b and b' chains.

The protein localises to the cell inner membrane. Its function is as follows. F(1)F(0) ATP synthase produces ATP from ADP in the presence of a proton or sodium gradient. F-type ATPases consist of two structural domains, F(1) containing the extramembraneous catalytic core and F(0) containing the membrane proton channel, linked together by a central stalk and a peripheral stalk. During catalysis, ATP synthesis in the catalytic domain of F(1) is coupled via a rotary mechanism of the central stalk subunits to proton translocation. Functionally, this protein is part of the stalk that links CF(0) to CF(1). It either transmits conformational changes from CF(0) to CF(1) or is implicated in proton conduction. The protein is ATP synthase subunit delta of Rhodospirillum centenum (strain ATCC 51521 / SW).